A 627-amino-acid polypeptide reads, in one-letter code: Polyadenylate-binding protein, cytoplasmic and nuclear (627 aa).

Polar residues predominate over residues methionine 1 to glutamate 11. The tract at residues methionine 1–valine 46 is disordered. 4 RRM domains span residues alanine 51–arginine 129, glycine 139–serine 216, threonine 232–lysine 309, and valine 335–arginine 412. The segment covering aspartate 511 to glycine 535 has biased composition (low complexity). The disordered stretch occupies residues aspartate 511–glutamine 537. Residues glutamine 537 to lysine 618 form the PABC domain.

Belongs to the polyadenylate-binding protein type-1 family.

Its subcellular location is the cytoplasm. The protein localises to the nucleus. Binds the poly(A) tail of mRNA. Appears to be an important mediator of the multiple roles of the poly(A) tail in mRNA biogenesis, stability and translation. In the nucleus, involved in both mRNA cleavage and polyadenylation. Is also required for efficient mRNA export to the cytoplasm. Acts in concert with a poly(A)-specific nuclease (PAN) to affect poly(A) tail shortening, which may occur concomitantly with either nucleocytoplasmic mRNA transport or translational initiation. In the cytoplasm, stimulates translation initiation and regulates mRNA decay through translation termination-coupled poly(A) shortening, probably mediated by PAN. The chain is Polyadenylate-binding protein, cytoplasmic and nuclear (PAB1) from Debaryomyces hansenii (strain ATCC 36239 / CBS 767 / BCRC 21394 / JCM 1990 / NBRC 0083 / IGC 2968) (Yeast).